Reading from the N-terminus, the 492-residue chain is Glutamyl-tRNA(Gln) amidotransferase subunit A (492 aa).

Active-site charge relay system residues include Lys-78 and Ser-158. The Acyl-ester intermediate role is filled by Ser-182.

It belongs to the amidase family. GatA subfamily. As to quaternary structure, heterotrimer of A, B and C subunits.

The catalysed reaction is L-glutamyl-tRNA(Gln) + L-glutamine + ATP + H2O = L-glutaminyl-tRNA(Gln) + L-glutamate + ADP + phosphate + H(+). Its function is as follows. Allows the formation of correctly charged Gln-tRNA(Gln) through the transamidation of misacylated Glu-tRNA(Gln) in organisms which lack glutaminyl-tRNA synthetase. The reaction takes place in the presence of glutamine and ATP through an activated gamma-phospho-Glu-tRNA(Gln). The chain is Glutamyl-tRNA(Gln) amidotransferase subunit A from Orientia tsutsugamushi (strain Boryong) (Rickettsia tsutsugamushi).